A 526-amino-acid chain; its full sequence is Bifunctional purine biosynthesis protein PurH (526 aa).

An MGS-like domain is found at 1–147 (MSVIKRALIS…KNWKHVAIVT (147 aa)).

The protein belongs to the PurH family.

It carries out the reaction (6R)-10-formyltetrahydrofolate + 5-amino-1-(5-phospho-beta-D-ribosyl)imidazole-4-carboxamide = 5-formamido-1-(5-phospho-D-ribosyl)imidazole-4-carboxamide + (6S)-5,6,7,8-tetrahydrofolate. The enzyme catalyses IMP + H2O = 5-formamido-1-(5-phospho-D-ribosyl)imidazole-4-carboxamide. It functions in the pathway purine metabolism; IMP biosynthesis via de novo pathway; 5-formamido-1-(5-phospho-D-ribosyl)imidazole-4-carboxamide from 5-amino-1-(5-phospho-D-ribosyl)imidazole-4-carboxamide (10-formyl THF route): step 1/1. Its pathway is purine metabolism; IMP biosynthesis via de novo pathway; IMP from 5-formamido-1-(5-phospho-D-ribosyl)imidazole-4-carboxamide: step 1/1. This is Bifunctional purine biosynthesis protein PurH from Neisseria gonorrhoeae (strain ATCC 700825 / FA 1090).